We begin with the raw amino-acid sequence, 297 residues long: Transmembrane protein 178A (297 aa).

The signal sequence occupies residues 1–25 (MEPRALVTALSLGLSLCSLGLLVTA). Residues 26 to 179 (IFTDHWYETD…LLHLRRITAG (154 aa)) lie on the Extracellular side of the membrane. The segment covering 41-57 (ESCERSRAGADPPDQKN) has biased composition (basic and acidic residues). The interval 41–84 (ESCERSRAGADPPDQKNRLMPLSHLPLRDSPPLGRRLLPGGPGR) is disordered. Residues 68–79 (RDSPPLGRRLLP) are compositionally biased toward low complexity. N-linked (GlcNAc...) asparagine glycosylation is present at N158. A helical membrane pass occupies residues 180–200 (FLGMAVAVLLCGCIVATVSFF). At 201–208 (WEESLTQH) the chain is on the cytoplasmic side. A helical transmembrane segment spans residues 209 to 229 (VAGLLFLMTGIFCTISLCTYA). The Extracellular portion of the chain corresponds to 230-257 (ASISYDLNRLPKLIYSLPADVEHGYSWS). A helical transmembrane segment spans residues 258–278 (IFCAWCSLGFIVAAGGLCIAY). The Cytoplasmic segment spans residues 279-297 (PFISRTKIAQLKSGRDSTV).

This sequence belongs to the TMEM178 family. As to quaternary structure, interacts with STIM1.

Its subcellular location is the endoplasmic reticulum membrane. Acts as a negative regulator of osteoclast differentiation in basal and inflammatory conditions by regulating TNFSF11-induced Ca (2+) fluxes, thereby controlling the induction of NFATC1. This is Transmembrane protein 178A (TMEM178A) from Homo sapiens (Human).